The following is a 389-amino-acid chain: (2R)-sulfolactate sulfo-lyase subunit beta (389 aa).

This sequence belongs to the UxaA family. (2R)-sulfolactate sulfo-lyase is composed of a SuyA and a SuyB subunit.

It is found in the cytoplasm. The catalysed reaction is (2R)-3-sulfolactate = sulfite + pyruvate + H(+). In terms of biological role, together with SuyA, desulfonates sulfolactate to pyruvate and sulfite. This is (2R)-sulfolactate sulfo-lyase subunit beta (suyB) from Chromohalobacter salexigens (strain ATCC BAA-138 / DSM 3043 / CIP 106854 / NCIMB 13768 / 1H11).